The primary structure comprises 364 residues: UDP-N-acetylglucosamine--N-acetylmuramyl-(pentapeptide) pyrophosphoryl-undecaprenol N-acetylglucosamine transferase (364 aa).

UDP-N-acetyl-alpha-D-glucosamine-binding positions include 10 to 12, Asn-124, Ser-195, and Gln-295; that span reads TGG.

This sequence belongs to the glycosyltransferase 28 family. MurG subfamily.

It is found in the cell membrane. It carries out the reaction di-trans,octa-cis-undecaprenyl diphospho-N-acetyl-alpha-D-muramoyl-L-alanyl-D-glutamyl-meso-2,6-diaminopimeloyl-D-alanyl-D-alanine + UDP-N-acetyl-alpha-D-glucosamine = di-trans,octa-cis-undecaprenyl diphospho-[N-acetyl-alpha-D-glucosaminyl-(1-&gt;4)]-N-acetyl-alpha-D-muramoyl-L-alanyl-D-glutamyl-meso-2,6-diaminopimeloyl-D-alanyl-D-alanine + UDP + H(+). It participates in cell wall biogenesis; peptidoglycan biosynthesis. Functionally, cell wall formation. Catalyzes the transfer of a GlcNAc subunit on undecaprenyl-pyrophosphoryl-MurNAc-pentapeptide (lipid intermediate I) to form undecaprenyl-pyrophosphoryl-MurNAc-(pentapeptide)GlcNAc (lipid intermediate II). This Bacillus pumilus (strain SAFR-032) protein is UDP-N-acetylglucosamine--N-acetylmuramyl-(pentapeptide) pyrophosphoryl-undecaprenol N-acetylglucosamine transferase.